The sequence spans 252 residues: Urease accessory protein UreH (252 aa).

It belongs to the UreD family. UreH, UreF and UreG form a complex that acts as a GTP-hydrolysis-dependent molecular chaperone, activating the urease apoprotein by helping to assemble the nickel containing metallocenter of UreC. The UreE protein probably delivers the nickel.

Its subcellular location is the cytoplasm. In terms of biological role, required for maturation of urease via the functional incorporation of the urease nickel metallocenter. The polypeptide is Urease accessory protein UreH (Helicobacter hepaticus (strain ATCC 51449 / 3B1)).